The primary structure comprises 263 residues: Thiazole synthase (263 aa).

Catalysis depends on K100, which acts as the Schiff-base intermediate with DXP. 1-deoxy-D-xylulose 5-phosphate-binding positions include G161, 188 to 189 (AG), and 210 to 211 (NS).

Belongs to the ThiG family. As to quaternary structure, homotetramer. Forms heterodimers with either ThiH or ThiS.

Its subcellular location is the cytoplasm. The catalysed reaction is [ThiS sulfur-carrier protein]-C-terminal-Gly-aminoethanethioate + 2-iminoacetate + 1-deoxy-D-xylulose 5-phosphate = [ThiS sulfur-carrier protein]-C-terminal Gly-Gly + 2-[(2R,5Z)-2-carboxy-4-methylthiazol-5(2H)-ylidene]ethyl phosphate + 2 H2O + H(+). It functions in the pathway cofactor biosynthesis; thiamine diphosphate biosynthesis. In terms of biological role, catalyzes the rearrangement of 1-deoxy-D-xylulose 5-phosphate (DXP) to produce the thiazole phosphate moiety of thiamine. Sulfur is provided by the thiocarboxylate moiety of the carrier protein ThiS. In vitro, sulfur can be provided by H(2)S. This chain is Thiazole synthase, found in Pseudoalteromonas translucida (strain TAC 125).